We begin with the raw amino-acid sequence, 259 residues long: Transcription factor bHLH125 (259 aa).

A bHLH domain is found at 73–125 (SKKMKHRDIERQRRQEVSSLFKRLRTLLPFQYIQGKRSTSDHIVQAVNYIKDL).

As to quaternary structure, homodimer.

It localises to the nucleus. This is Transcription factor bHLH125 (BHLH125) from Arabidopsis thaliana (Mouse-ear cress).